The sequence spans 370 residues: Histidinol-phosphate aminotransferase (370 aa).

At lysine 223 the chain carries N6-(pyridoxal phosphate)lysine.

The protein belongs to the class-II pyridoxal-phosphate-dependent aminotransferase family. Histidinol-phosphate aminotransferase subfamily. In terms of assembly, homodimer. Pyridoxal 5'-phosphate is required as a cofactor.

It carries out the reaction L-histidinol phosphate + 2-oxoglutarate = 3-(imidazol-4-yl)-2-oxopropyl phosphate + L-glutamate. It functions in the pathway amino-acid biosynthesis; L-histidine biosynthesis; L-histidine from 5-phospho-alpha-D-ribose 1-diphosphate: step 7/9. In Methylobacterium nodulans (strain LMG 21967 / CNCM I-2342 / ORS 2060), this protein is Histidinol-phosphate aminotransferase.